A 236-amino-acid chain; its full sequence is Opacity protein opA50 (236 aa).

A signal peptide is located at residue Ala1.

The protein belongs to the opacity porin family.

It localises to the cell outer membrane. In terms of biological role, implicated in a number of adherence functions. OPA proteins are implicated in pathogenesis and are subject to phase variation. This Neisseria gonorrhoeae protein is Opacity protein opA50 (opaC).